The chain runs to 149 residues: 3-dehydroquinate dehydratase (149 aa).

Tyr-24 acts as the Proton acceptor in catalysis. Substrate-binding residues include Asn-75, His-81, and Asp-88. The active-site Proton donor is the His-101. Substrate-binding positions include 102–103 (LS) and Arg-112.

This sequence belongs to the type-II 3-dehydroquinase family. As to quaternary structure, homododecamer.

The enzyme catalyses 3-dehydroquinate = 3-dehydroshikimate + H2O. Its pathway is metabolic intermediate biosynthesis; chorismate biosynthesis; chorismate from D-erythrose 4-phosphate and phosphoenolpyruvate: step 3/7. In terms of biological role, catalyzes a trans-dehydration via an enolate intermediate. In Bartonella tribocorum (strain CIP 105476 / IBS 506), this protein is 3-dehydroquinate dehydratase.